Consider the following 105-residue polypeptide: Small ribosomal subunit protein uS10 (105 aa).

Belongs to the universal ribosomal protein uS10 family. As to quaternary structure, part of the 30S ribosomal subunit.

Its function is as follows. Involved in the binding of tRNA to the ribosomes. The protein is Small ribosomal subunit protein uS10 of Phytoplasma australiense.